The sequence spans 296 residues: ATP phosphoribosyltransferase (296 aa).

It belongs to the ATP phosphoribosyltransferase family. Long subfamily. Mg(2+) serves as cofactor.

The protein localises to the cytoplasm. It carries out the reaction 1-(5-phospho-beta-D-ribosyl)-ATP + diphosphate = 5-phospho-alpha-D-ribose 1-diphosphate + ATP. It participates in amino-acid biosynthesis; L-histidine biosynthesis; L-histidine from 5-phospho-alpha-D-ribose 1-diphosphate: step 1/9. With respect to regulation, feedback inhibited by histidine. In terms of biological role, catalyzes the condensation of ATP and 5-phosphoribose 1-diphosphate to form N'-(5'-phosphoribosyl)-ATP (PR-ATP). Has a crucial role in the pathway because the rate of histidine biosynthesis seems to be controlled primarily by regulation of HisG enzymatic activity. This is ATP phosphoribosyltransferase from Halorubrum lacusprofundi (strain ATCC 49239 / DSM 5036 / JCM 8891 / ACAM 34).